The chain runs to 434 residues: ATP-dependent protease ATPase subunit HslU (434 aa).

Residues isoleucine 18, 60 to 65 (GVGKTE), aspartate 247, glutamate 312, and arginine 384 each bind ATP.

Belongs to the ClpX chaperone family. HslU subfamily. As to quaternary structure, a double ring-shaped homohexamer of HslV is capped on each side by a ring-shaped HslU homohexamer. The assembly of the HslU/HslV complex is dependent on binding of ATP.

The protein localises to the cytoplasm. In terms of biological role, ATPase subunit of a proteasome-like degradation complex; this subunit has chaperone activity. The binding of ATP and its subsequent hydrolysis by HslU are essential for unfolding of protein substrates subsequently hydrolyzed by HslV. HslU recognizes the N-terminal part of its protein substrates and unfolds these before they are guided to HslV for hydrolysis. The sequence is that of ATP-dependent protease ATPase subunit HslU from Brucella anthropi (strain ATCC 49188 / DSM 6882 / CCUG 24695 / JCM 21032 / LMG 3331 / NBRC 15819 / NCTC 12168 / Alc 37) (Ochrobactrum anthropi).